The sequence spans 1072 residues: Neurofilament heavy polypeptide (1072 aa).

S74 bears the Phosphoserine mark. Positions 94 to 409 (EKEQLQALND…KLLEGEECRI (316 aa)) constitute an IF rod domain. Coiled coils occupy residues 98–132 (LQALNDRFAGYIDKVRQLEAHNRTLEGEAAALRQQ), 174–222 (IAHV…LQEE), and 293–380 (LDRL…QLRE). Positions 278–643 (TVQSTLQSEE…AKSPAEAKSP (366 aa)) are 55 X 6 AA approximate tandem repeats of K-S-P-[VAGSE]-[KEVTSGA]-[EAVK]. A phosphoserine mark is found at S343, S414, and S417. The tract at residues 454–1072 (EEQTEEIQVT…PEDKAAKGDK (619 aa)) is disordered. Positions 455 to 487 (EQTEEIQVTEEVTEEEDKEAQGEEEEEAEEGGE) are enriched in acidic residues. Residues 488 to 499 (EAATTSPPAEEA) show a composition bias toward low complexity. Residue S501 is modified to Phosphoserine. Over residues 501-584 (SPEKETKSPV…KSPAEAKSPA (84 aa)) the composition is skewed to basic and acidic residues. 36 repeat units span residues 507–512 (KSPVKE), 515–520 (KSPAEA), 521–526 (KSPAEA), 527–532 (KSPAEA), 533–538 (KSPAEV), 539–544 (KSPAEV), 545–550 (KSPAEA), 551–556 (KSPAEA), 557–562 (KSPAEV), 563–568 (KSPAEV), 569–574 (KSPAEA), 575–580 (KSPAEA), 581–586 (KSPAEV), 587–592 (KSPATV), 593–598 (KSPGEA), 599–604 (KSPAEA), 605–610 (KSPAEV), 611–616 (KSPVEA), 617–622 (KSPAEA), 623–628 (KSPASV), 629–634 (KSPGEA), 635–640 (KSPAEA), 641–646 (KSPAEV), 647–652 (KSPATV), 653–658 (KSPVEA), 659–664 (KSPAEV), 665–670 (KSPVTV), 671–676 (KSPAEA), 677–682 (KSPVEV), 683–688 (KSPASV), 689–694 (KSPSEA), 695–700 (KSPAGA), 701–706 (KSPAEA), 707–712 (KSPVVA), 713–718 (KSPAEA), and 719–724 (KSPAEA). Phosphoserine is present on residues S516, S522, S528, S534, S540, S546, S552, S558, S564, S570, S576, S582, S588, S594, S600, S606, S612, S618, S624, S627, S630, S636, S642, S648, S654, S660, S666, S672, S678, S684, S687, S690, S696, S702, S708, S714, and S720. The segment covering 600–620 (SPAEAKSPAEVKSPVEAKSPA) has biased composition (basic and acidic residues). Low complexity predominate over residues 621-631 (EAKSPASVKSP). Positions 720-774 (SPAEAKPPAEAKSPAEAKSPAEAKSPAEAKSPAEAKSPVEVKSPEKAKSPVKEGA) are enriched in basic and acidic residues. The stretch at 725–730 (KPPAEA) is one 37; approximate repeat. A run of 7 repeats spans residues 731-736 (KSPAEA), 737-742 (KSPAEA), 743-748 (KSPAEA), 749-754 (KSPAEA), 755-760 (KSPVEV), 761-766 (KSPEKA), and 767-772 (KSPVKE). Residues S732, S738, S744, S750, S756, and S762 each carry the phosphoserine modification. A 45; approximate repeat occupies 775–780 (KSLAEA). Phosphoserine is present on residues S776, S782, and S788. 2 repeat units span residues 781–786 (KSPEKA) and 787–792 (KSPVKE). 2 stretches are compositionally biased toward basic and acidic residues: residues 781-953 (KSPE…KAAA) and 963-1072 (GVKE…KGDK). One copy of the 48; approximate repeat lies at 795 to 800 (KPPAEV). Tandem repeats lie at residues 801–806 (KSPEKA), 807–812 (KSPMKE), 815–820 (KSPEKA), and 826–831 (KSPEAK). A phosphoserine mark is found at S802, S808, S816, and S827. T832 is subject to Phosphothreonine. Phosphoserine occurs at positions 846, 852, 860, 880, and 937. 3 tandem repeats follow at residues 851 to 856 (KSPAKE), 859 to 864 (KSPEKE), and 879 to 884 (KSPVEE).

Belongs to the intermediate filament family. As to quaternary structure, forms heterodimers with NEFL; which can further hetero-oligomerize (in vitro). Forms heterodimers with INA (in vitro). In terms of processing, there are a number of repeats of the tripeptide K-S-P, NFH is phosphorylated on a number of the serines in this motif. It is thought that phosphorylation of NFH results in the formation of interfilament cross bridges that are important in the maintenance of axonal caliber. Post-translationally, phosphorylation seems to play a major role in the functioning of the larger neurofilament polypeptides (NF-M and NF-H), the levels of phosphorylation being altered developmentally and coincidentally with a change in the neurofilament function. Phosphorylated in the head and rod regions by the PKC kinase PKN1, leading to the inhibition of polymerization. In terms of tissue distribution, expressed in the dorsal root ganglion neurons (at protein level). Expressed in cutaneous and muscular sensory neurons.

It localises to the cytoplasm. The protein localises to the cytoskeleton. Its subcellular location is the cell projection. The protein resides in the axon. In terms of biological role, neurofilaments usually contain three intermediate filament proteins: NEFL, NEFM, and NEFH which are involved in the maintenance of neuronal caliber. NEFH has an important function in mature axons that is not subserved by the two smaller NEF proteins. May additionally cooperate with the neuronal intermediate filament proteins PRPH and INA to form neuronal filamentous networks. The protein is Neurofilament heavy polypeptide (Nefh) of Rattus norvegicus (Rat).